The sequence spans 125 residues: Small ribosomal subunit protein uS13 (125 aa).

The tract at residues 95–125 (GLPLRGQRTKTNARTRKGKRKTVANKKIASK) is disordered.

This sequence belongs to the universal ribosomal protein uS13 family. As to quaternary structure, part of the 30S ribosomal subunit. Forms a loose heterodimer with protein S19. Forms two bridges to the 50S subunit in the 70S ribosome.

In terms of biological role, located at the top of the head of the 30S subunit, it contacts several helices of the 16S rRNA. In the 70S ribosome it contacts the 23S rRNA (bridge B1a) and protein L5 of the 50S subunit (bridge B1b), connecting the 2 subunits; these bridges are implicated in subunit movement. Contacts the tRNAs in the A and P-sites. This Borrelia garinii subsp. bavariensis (strain ATCC BAA-2496 / DSM 23469 / PBi) (Borreliella bavariensis) protein is Small ribosomal subunit protein uS13.